A 335-amino-acid polypeptide reads, in one-letter code: Mycobacterial beta-ketoacyl-[acyl-carrier-protein] synthase III (335 aa).

Active-site residues include Cys-122 and His-258. The ACP-binding stretch occupies residues 259–263 (QANSR). Asn-289 is an active-site residue.

This sequence belongs to the thiolase-like superfamily. FabH family. In terms of assembly, homodimer.

Its subcellular location is the cytoplasm. It catalyses the reaction malonyl-[ACP] + dodecanoyl-CoA + H(+) = 3-oxotetradecanoyl-[ACP] + CO2 + CoA. The protein operates within lipid metabolism; fatty acid biosynthesis. Its pathway is lipid metabolism; mycolic acid biosynthesis. Catalyzes the condensation reaction of fatty acid synthesis by the addition to an acyl acceptor of two carbons from malonyl-ACP. Catalyzes the first condensation reaction which initiates fatty acid synthesis and may therefore play a role in governing the total rate of fatty acid production. Possesses both acetoacetyl-ACP synthase and acetyl transacylase activities. Its substrate specificity determines the biosynthesis of branched-chain and/or straight-chain of fatty acids. In Mycobacterium ulcerans (strain Agy99), this protein is Mycobacterial beta-ketoacyl-[acyl-carrier-protein] synthase III.